Reading from the N-terminus, the 86-residue chain is Small ribosomal subunit protein bS16 (86 aa).

This sequence belongs to the bacterial ribosomal protein bS16 family.

The chain is Small ribosomal subunit protein bS16 from Methylacidiphilum infernorum (isolate V4) (Methylokorus infernorum (strain V4)).